The sequence spans 166 residues: Large ribosomal subunit protein uL10 (166 aa).

Belongs to the universal ribosomal protein uL10 family. As to quaternary structure, part of the ribosomal stalk of the 50S ribosomal subunit. The N-terminus interacts with L11 and the large rRNA to form the base of the stalk. The C-terminus forms an elongated spine to which L12 dimers bind in a sequential fashion forming a multimeric L10(L12)X complex.

Its function is as follows. Forms part of the ribosomal stalk, playing a central role in the interaction of the ribosome with GTP-bound translation factors. In Geobacillus sp. (strain WCH70), this protein is Large ribosomal subunit protein uL10.